A 105-amino-acid chain; its full sequence is Urease subunit beta (105 aa).

This sequence belongs to the urease beta subunit family. As to quaternary structure, heterotrimer of UreA (gamma), UreB (beta) and UreC (alpha) subunits. Three heterotrimers associate to form the active enzyme.

The protein localises to the cytoplasm. The enzyme catalyses urea + 2 H2O + H(+) = hydrogencarbonate + 2 NH4(+). The protein operates within nitrogen metabolism; urea degradation; CO(2) and NH(3) from urea (urease route): step 1/1. This Pseudomonas entomophila (strain L48) protein is Urease subunit beta.